We begin with the raw amino-acid sequence, 345 residues long: Solute carrier family 25 member 43 (345 aa).

Solcar repeat units lie at residues 11–100, 104–195, and 199–297; these read TSSQ…IDEL, SQWR…QERH, and TSLQ…LYRN. Transmembrane regions (helical) follow at residues 16–36, 67–87, 109–129, 165–185, 204–224, and 261–281; these read LMCV…LEVV, FWKG…IHLA, IVAG…LEVV, GFSL…AVYI, FING…FETV, and VMAL…YFGL.

Belongs to the mitochondrial carrier (TC 2.A.29) family.

It is found in the mitochondrion inner membrane. The protein is Solute carrier family 25 member 43 (slc25a43) of Danio rerio (Zebrafish).